The chain runs to 35 residues: Photosystem II reaction center protein M (35 aa).

Residues 5–25 traverse the membrane as a helical segment; it reads ILAFIATALFILVPTAFLLII.

Belongs to the PsbM family. As to quaternary structure, PSII is composed of 1 copy each of membrane proteins PsbA, PsbB, PsbC, PsbD, PsbE, PsbF, PsbH, PsbI, PsbJ, PsbK, PsbL, PsbM, PsbT, PsbX, PsbY, PsbZ, Psb30/Ycf12, at least 3 peripheral proteins of the oxygen-evolving complex and a large number of cofactors. It forms dimeric complexes.

Its subcellular location is the plastid. The protein resides in the chloroplast thylakoid membrane. In terms of biological role, one of the components of the core complex of photosystem II (PSII). PSII is a light-driven water:plastoquinone oxidoreductase that uses light energy to abstract electrons from H(2)O, generating O(2) and a proton gradient subsequently used for ATP formation. It consists of a core antenna complex that captures photons, and an electron transfer chain that converts photonic excitation into a charge separation. This subunit is found at the monomer-monomer interface. In Panax quinquefolius (American ginseng), this protein is Photosystem II reaction center protein M.